The chain runs to 294 residues: ATP phosphoribosyltransferase (294 aa).

The protein belongs to the ATP phosphoribosyltransferase family. Long subfamily. Requires Mg(2+) as cofactor.

It localises to the cytoplasm. It carries out the reaction 1-(5-phospho-beta-D-ribosyl)-ATP + diphosphate = 5-phospho-alpha-D-ribose 1-diphosphate + ATP. The protein operates within amino-acid biosynthesis; L-histidine biosynthesis; L-histidine from 5-phospho-alpha-D-ribose 1-diphosphate: step 1/9. Feedback inhibited by histidine. Catalyzes the condensation of ATP and 5-phosphoribose 1-diphosphate to form N'-(5'-phosphoribosyl)-ATP (PR-ATP). Has a crucial role in the pathway because the rate of histidine biosynthesis seems to be controlled primarily by regulation of HisG enzymatic activity. The sequence is that of ATP phosphoribosyltransferase from Chlorobaculum parvum (strain DSM 263 / NCIMB 8327) (Chlorobium vibrioforme subsp. thiosulfatophilum).